The chain runs to 49 residues: Large ribosomal subunit protein bL33A (49 aa).

This sequence belongs to the bacterial ribosomal protein bL33 family.

The sequence is that of Large ribosomal subunit protein bL33A from Geobacillus kaustophilus (strain HTA426).